A 373-amino-acid chain; its full sequence is tRNA-specific 2-thiouridylase MnmA (373 aa).

ATP contacts are provided by residues 12–19 (GMSGGVDS) and M38. Residues 98–100 (NPD) form an interaction with target base in tRNA region. C103 (nucleophile) is an active-site residue. Cysteines 103 and 200 form a disulfide. G127 lines the ATP pocket. An interaction with tRNA region spans residues 150-152 (KDQ). Catalysis depends on C200, which acts as the Cysteine persulfide intermediate. Positions 312-313 (RY) are interaction with tRNA.

Belongs to the MnmA/TRMU family.

It is found in the cytoplasm. The catalysed reaction is S-sulfanyl-L-cysteinyl-[protein] + uridine(34) in tRNA + AH2 + ATP = 2-thiouridine(34) in tRNA + L-cysteinyl-[protein] + A + AMP + diphosphate + H(+). In terms of biological role, catalyzes the 2-thiolation of uridine at the wobble position (U34) of tRNA, leading to the formation of s(2)U34. This Streptococcus pneumoniae (strain CGSP14) protein is tRNA-specific 2-thiouridylase MnmA.